Reading from the N-terminus, the 238-residue chain is uncharacterized protein (238 aa).

A run of 7 helical transmembrane segments spans residues Phe-19–Trp-39, Trp-64–Trp-84, Gln-85–Lys-105, Leu-112–Phe-132, Ile-141–Ser-161, Val-176–Leu-196, and Val-218–Leu-238.

It to B.subtilis YwiC.

It localises to the cell membrane. This is an uncharacterized protein from Haemophilus influenzae (strain ATCC 51907 / DSM 11121 / KW20 / Rd).